The chain runs to 212 residues: Suppressor of cytokine signaling 1 (212 aa).

Residues 1-55 (MVARNQVAADNAISPAAEPRRRSEPSSSSSSSSPAAPVRPRPCPAVPAPAPGDTH) form a disordered region. Positions 25–36 (PSSSSSSSSPAA) are enriched in low complexity. The span at 37–50 (PVRPRPCPAVPAPA) shows a compositional bias: pro residues. The kinase inhibitory region (KIR) stretch occupies residues 56-67 (FRTFRSHSDYRR). Residues 68–79 (ITRTSALLDACG) form an extended SH2 subdomain (ESS) region. An SH2 domain is found at 80–175 (FYWGPLSVHG…PLRQRRVRPL (96 aa)). The SOCS box domain occupies 162–211 (MLGAPLRQRRVRPLQELCRQRIVAAVGRENLARIPLNPVLRDYLSSFPFQ). The interval 174–183 (PLQELCRQRI) is interaction with Elongin BC complex.

This sequence belongs to the SOCS1 family. In terms of assembly, interacts with multiple activated proteins of the tyrosine kinase signaling pathway including JAK family kinases, TEC, KIT, GRB2 and VAV. Binding to JAKs is mediated through the KIR and SH2 domain to a phosphorylated tyrosine residue within the JAK JH1 domain. Binds the SH3 domain of GRB2 via diproline determinants in the N-terminus, and the N-terminal regulatory domain of VAV. Interacts with the Elongin BC complex (ELOB and ELOC). Component of an ECS CBC(SOCS1) E3 ubiquitin-protein ligase complex which contains Elongin BC, CUL5, RBX1 and SOCS1. Interacts (via SH2 domain and SOCS box) with TRIM8. Interacts with CUL2. Interacts with AXL and FGFR3. Interacts with INSR. Interacts with TRIM8. Interacts with DCUN1D1. Interacts with IFNGR1. High expression in thymus. Lower expression in lung and spleen. Expressed in both Th1 and Th2 cells.

It localises to the nucleus. The protein localises to the cytoplasmic vesicle. It functions in the pathway protein modification; protein ubiquitination. Essential negative regulator of type I and type II interferon (IFN) signaling, as well as that of other cytokines, including IL2, IL4, IL6 and leukemia inhibitory factor (LIF). Downregulates cytokine signaling by inhibiting the JAK/STAT signaling pathway. Acts by binding to JAK proteins and to IFNGR1 and inhibiting their kinase activity. In vitro, suppresses Tec protein-tyrosine activity. Regulates IFN-gamma (IFNG)-mediated sensory neuron survival. Probable substrate recognition component of an ECS (Elongin BC-CUL2/5-SOCS-box protein) E3 ubiquitin ligase complex which mediates the ubiquitination and subsequent proteasomal degradation of target proteins. The sequence is that of Suppressor of cytokine signaling 1 from Mus musculus (Mouse).